A 31-amino-acid polypeptide reads, in one-letter code: Cyclopsychotride-A (31 aa).

The segment at residues 1–31 (SIPCGESCVFIPCTVTALLGCSCKSKVCYKN) is a cross-link (cyclopeptide (Ser-Asn)). Disulfide bonds link Cys4–Cys21, Cys8–Cys23, and Cys13–Cys28.

Belongs to the cyclotide family. Bracelet subfamily. This is a cyclic peptide.

Functionally, probably participates in a plant defense mechanism. Has antibiotic activity. Inhibits the cytopathic effects and replication of the human immunodeficiency virus. Active against both Gram-positive and Gram-negative bacteria. This is Cyclopsychotride-A from Psychotria longipes.